A 306-amino-acid polypeptide reads, in one-letter code: Curved DNA-binding protein (306 aa).

The region spanning 5–69 is the J domain; the sequence is DYYAIMGVKP…QRRAEYDQMW (65 aa).

It localises to the cytoplasm. The protein localises to the nucleoid. Its function is as follows. DNA-binding protein that preferentially recognizes a curved DNA sequence. It is probably a functional analog of DnaJ; displays overlapping activities with DnaJ, but functions under different conditions, probably acting as a molecular chaperone in an adaptive response to environmental stresses other than heat shock. Lacks autonomous chaperone activity; binds native substrates and targets them for recognition by DnaK. Its activity is inhibited by the binding of CbpM. The sequence is that of Curved DNA-binding protein from Shigella dysenteriae serotype 1 (strain Sd197).